The primary structure comprises 249 residues: 2,3-bisphosphoglycerate-dependent phosphoglycerate mutase (249 aa).

Substrate-binding positions include 8 to 15 (RHGESTWN), 21 to 22 (TG), R60, 87 to 90 (ERHY), K98, 114 to 115 (RR), and 183 to 184 (GN). H9 serves as the catalytic Tele-phosphohistidine intermediate. E87 acts as the Proton donor/acceptor in catalysis.

Belongs to the phosphoglycerate mutase family. BPG-dependent PGAM subfamily. In terms of assembly, homodimer.

The enzyme catalyses (2R)-2-phosphoglycerate = (2R)-3-phosphoglycerate. It participates in carbohydrate degradation; glycolysis; pyruvate from D-glyceraldehyde 3-phosphate: step 3/5. Functionally, catalyzes the interconversion of 2-phosphoglycerate and 3-phosphoglycerate. This chain is 2,3-bisphosphoglycerate-dependent phosphoglycerate mutase, found in Azoarcus sp. (strain BH72).